The sequence spans 388 residues: Dual specificity mitogen-activated protein kinase kinase 1 (388 aa).

The interval 1–20 is disordered; that stretch reads PIQLNPAPDGSAVNGTSSAE. In terms of domain architecture, Protein kinase spans 61-356; it reads FEKISELGAG…LKQLMIHAFI (296 aa). ATP is bound by residues 67-75 and Lys-90; that span reads LGAGNGGVV. The active-site Proton acceptor is Asp-183. Residues Ser-211 and Ser-215 each carry the phosphoserine; by RAF modification. Residues 275–299 are disordered; that stretch reads DSPVTETSPRQRAPGRPMSSYGSDS.

The protein belongs to the protein kinase superfamily. STE Ser/Thr protein kinase family. MAP kinase kinase subfamily. Post-translationally, MAPKK is itself dependent on Ser/Thr phosphorylation for activity catalyzed by MAP kinase kinase kinases (RAF or MEKK1).

The protein localises to the cytoplasm. It is found in the cytoskeleton. Its subcellular location is the microtubule organizing center. The protein resides in the centrosome. It localises to the spindle pole body. The protein localises to the nucleus. It carries out the reaction L-seryl-[protein] + ATP = O-phospho-L-seryl-[protein] + ADP + H(+). The enzyme catalyses L-threonyl-[protein] + ATP = O-phospho-L-threonyl-[protein] + ADP + H(+). The catalysed reaction is L-tyrosyl-[protein] + ATP = O-phospho-L-tyrosyl-[protein] + ADP + H(+). In terms of biological role, dual specificity protein kinase which acts as an essential component of the MAP kinase signal transduction pathway. Binding of extracellular ligands such as growth factors, cytokines and hormones to their cell-surface receptors activates RAS and this initiates RAF1 activation. RAF1 then further activates the dual-specificity protein kinases MAP2K1/MEK1 and MAP2K2/MEK2. Both MAP2K1/MEK1 and MAP2K2/MEK2 function specifically in the MAPK/ERK cascade, and catalyze the concomitant phosphorylation of a threonine and a tyrosine residue in a Thr-Glu-Tyr sequence located in the extracellular signal-regulated kinases MAPK3/ERK1 and MAPK1/ERK2, leading to their activation and further transduction of the signal within the MAPK/ERK cascade. Depending on the cellular context, this pathway mediates diverse biological functions such as cell growth, adhesion, survival and differentiation predominantly through the regulation of transcription, metabolism and cytoskeletal rearrangements. The protein is Dual specificity mitogen-activated protein kinase kinase 1 (MAP2K1) of Serinus canaria (Island canary).